The following is a 294-amino-acid chain: MDNLQNVLKIGLPKGSLQDSTLELFANAGFHFSVQSRSYFPSIEDDELEAILIRAQEMAHYVELGAFDVGLTGKDWIIETDADVVEVADLVYSKASMRPVRWVLAVPESSAIKSVKDLEGKHIATEVVNITKKYLARNGVNASVEFSWGATEVKPPDLADAIVEVTETGSSLRANKLRIVDTILESNTKLIANKASWNDSWKREKIENMAMLLQGAINAQGKVGLKMNAPKAALQNIAAIIPALRQPTISNLADENWVALEVIVSEKTVRKLIPELKRAGAEGIFEYNINKLID.

Belongs to the ATP phosphoribosyltransferase family. Long subfamily. The cofactor is Mg(2+).

The protein localises to the cytoplasm. The enzyme catalyses 1-(5-phospho-beta-D-ribosyl)-ATP + diphosphate = 5-phospho-alpha-D-ribose 1-diphosphate + ATP. It functions in the pathway amino-acid biosynthesis; L-histidine biosynthesis; L-histidine from 5-phospho-alpha-D-ribose 1-diphosphate: step 1/9. Feedback inhibited by histidine. Catalyzes the condensation of ATP and 5-phosphoribose 1-diphosphate to form N'-(5'-phosphoribosyl)-ATP (PR-ATP). Has a crucial role in the pathway because the rate of histidine biosynthesis seems to be controlled primarily by regulation of HisG enzymatic activity. In Chlorobium phaeobacteroides (strain DSM 266 / SMG 266 / 2430), this protein is ATP phosphoribosyltransferase.